The following is a 424-amino-acid chain: Glutamate-1-semialdehyde 2,1-aminomutase (424 aa).

Lys263 bears the N6-(pyridoxal phosphate)lysine mark.

This sequence belongs to the class-III pyridoxal-phosphate-dependent aminotransferase family. HemL subfamily. Homodimer. Pyridoxal 5'-phosphate serves as cofactor.

The protein resides in the cytoplasm. The catalysed reaction is (S)-4-amino-5-oxopentanoate = 5-aminolevulinate. Its pathway is porphyrin-containing compound metabolism; protoporphyrin-IX biosynthesis; 5-aminolevulinate from L-glutamyl-tRNA(Glu): step 2/2. In Campylobacter jejuni subsp. doylei (strain ATCC BAA-1458 / RM4099 / 269.97), this protein is Glutamate-1-semialdehyde 2,1-aminomutase.